A 220-amino-acid chain; its full sequence is Endonuclease NucS (220 aa).

Belongs to the NucS endonuclease family.

The protein resides in the cytoplasm. Functionally, cleaves both 3' and 5' ssDNA extremities of branched DNA structures. This Parafrankia sp. (strain EAN1pec) protein is Endonuclease NucS.